Here is a 214-residue protein sequence, read N- to C-terminus: uncharacterized protein (214 aa).

This is an uncharacterized protein from Rhodobacter capsulatus (Rhodopseudomonas capsulata).